A 342-amino-acid polypeptide reads, in one-letter code: Muscleblind-like protein 3 (342 aa).

C3H1-type zinc fingers lie at residues 14-42, 48-74, 174-202, and 210-236; these read WLTLEVCREFQRGTCSRADAECRFAHPPR, NGRVVACFDSLKGRCTRENCKYLHPPP, TDRLEVCREFQRGNCTRGESECRYAHPTD, and DNSVTICMDYIKGRCSREKCKYFHPPP. Residues 316-326 show a composition bias toward low complexity; sequence PSTVSTATPPA. Residues 316–342 are disordered; that stretch reads PSTVSTATPPASNVPYVPTTTGNQLKY. Over residues 333-342 the composition is skewed to polar residues; that stretch reads PTTTGNQLKY.

Belongs to the muscleblind family.

Its subcellular location is the nucleus. The protein resides in the cytoplasm. In terms of biological role, mediates pre-mRNA alternative splicing regulation. Acts either as activator or repressor of splicing on specific pre-mRNA targets. Inhibits cardiac troponin-T (TNNT2) pre-mRNA exon inclusion but induces insulin receptor (IR) pre-mRNA exon inclusion in muscle. Antagonizes the alternative splicing activity pattern of CELF proteins. Could inhibit terminal muscle differentiation, acting at approximately the time of myogenin induction. The chain is Muscleblind-like protein 3 (Mbnl3) from Mus musculus (Mouse).